The sequence spans 325 residues: MNPFTDYQVQFFERIKLKPRIIESLDDISEVLVACSKVFTFENLDIISNTQEALTRKVLIKQVLINKQGGLCYKANTLLYYFLLDFGLNVHQTRATCENQESHSRWNIGHGHMINILNFENKLYVMDVAFGCNLSLRPVPITDDGSEVIESCIGLYRVIKRENIVAGVYHYTHILEHRKPDTYLIESAKNWVIGYAFDPLLICKNDGDDDDDDNNNNNNTHQTQIQQLVIDDPNKDFCVKPLATKLINNTDNNNNNNSIATLTLNSFTLTNCKTGEKIKTNFDNDNLFEQFNQHLISIFNLPPLKIIPQIFLNQTSNFPINNLNS.

Cys-72 (acyl-thioester intermediate) is an active-site residue. Residues His-112 and Asp-127 contribute to the active site.

Belongs to the arylamine N-acetyltransferase family.

It carries out the reaction an arylamine + acetyl-CoA = an N-acetylarylamine + CoA. The polypeptide is Probable arylamine N-acetyltransferase 1 (Dictyostelium discoideum (Social amoeba)).